A 630-amino-acid chain; its full sequence is MADITQQMNNLSVEQGSQGNGSSRSQYVPPHLRNRPSGGNGSFGGNRRGGFNNNSFGGFDNNRRGGYNNNSFGGYNNNRRGGFNNARGSGRYNTPKPGVGRWVDGKHEPAEKNERLEKELYGIDEEPTTQSSGINFDNYDDIPVEASGEGVPEPITAFTAPPLDPLLVENVKLSRFTKPTPVQKYSVPIVAAGRDLMACAQTGSGKTGGFLFPVLSESYMNGPAEVPETAGAFSSHKVYPTALVMAPTRELVSQIFDEAKKFAYRSWVRPSVVYGGADIGGQIRNLERGCDLLVATPGRLKDLLERGRVSLASIKYLVLDEADRMLDMGFEPQIRHIVQECDMPGVEDRQTLMFSATFPKEIQFLARDFLKEYIFLSVGRVGSTSENITQKILYVEDEEKKSVLLDLLSANDNGLTIIFTETKRMADNLADFLYDQGFPATAIHGDRSQYEREKALAAFKTGTAPILVATAVAARGLDIPNVSHIVNYDLPSDIDDYVHRIGRTGRAGNIGIATAFFNRNNKNIVKGLVDLLTEANQEIPDFLNKIARESAFGGKSMRGGSSRGGRGGATRDFRKQGGSYGGGASSSNWGGSSSSGGGWGSSNNGGYSGYSGRSNGSSSYGNPSASNSWW.

Residues 1-14 (MADITQQMNNLSVE) are compositionally biased toward polar residues. 2 disordered regions span residues 1-49 (MADI…NRRG) and 78-111 (NRRG…EPAE). Low complexity predominate over residues 15-26 (QGSQGNGSSRSQ). The segment covering 38-48 (GGNGSFGGNRR) has biased composition (gly residues). A compositionally biased stretch (low complexity) spans 78–91 (NRRGGFNNARGSGR). The short motif at 156–184 (TAFTAPPLDPLLVENVKLSRFTKPTPVQK) is the Q motif element. One can recognise a Helicase ATP-binding domain in the interval 187–376 (VPIVAAGRDL…RDFLKEYIFL (190 aa)). An ATP-binding site is contributed by 200-207 (AQTGSGKT). The short motif at 320-323 (DEAD) is the DEAD box element. One can recognise a Helicase C-terminal domain in the interval 387–547 (NITQKILYVE…EIPDFLNKIA (161 aa)). Positions 554-630 (GKSMRGGSSR…GNPSASNSWW (77 aa)) are disordered. The segment covering 601 to 630 (SSNNGGYSGYSGRSNGSSSYGNPSASNSWW) has biased composition (low complexity).

This sequence belongs to the DEAD box helicase family. DDX3/DED1 subfamily.

The protein localises to the cytoplasm. The catalysed reaction is ATP + H2O = ADP + phosphate + H(+). Its function is as follows. ATP-binding RNA helicase involved in translation initiation. Remodels RNA in response to ADP and ATP concentrations by facilitating disruption, but also formation of RNA duplexes. The protein is ATP-dependent RNA helicase DED1 (DED1) of Debaryomyces hansenii (strain ATCC 36239 / CBS 767 / BCRC 21394 / JCM 1990 / NBRC 0083 / IGC 2968) (Yeast).